The sequence spans 344 residues: Lipase chaperone (344 aa).

A helical membrane pass occupies residues Ala-14 to Ala-34.

This sequence belongs to the lipase chaperone family.

Its subcellular location is the cell inner membrane. In terms of biological role, may be involved in the folding of the extracellular lipase during its passage through the periplasm. This is Lipase chaperone (lifO) from Burkholderia cepacia (Pseudomonas cepacia).